The following is a 344-amino-acid chain: Holliday junction branch migration complex subunit RuvB (344 aa).

Residues 4 to 194 (CLLRFCYNSL…FGITGHMEYY (191 aa)) are large ATPase domain (RuvB-L). Residues L33, R34, G75, K78, T79, T80, 141–143 (EDF), R184, Y194, and R231 each bind ATP. Residue T79 participates in Mg(2+) binding. Residues 195–265 (TDIDLTEIVE…ITDKALTMLD (71 aa)) form a small ATPAse domain (RuvB-S) region. A head domain (RuvB-H) region spans residues 268–344 (HEGLDYVDQK…YEHLGYRYTE (77 aa)). The DNA site is built by R304, R323, R325, and R328.

It belongs to the RuvB family. In terms of assembly, homohexamer. Forms an RuvA(8)-RuvB(12)-Holliday junction (HJ) complex. HJ DNA is sandwiched between 2 RuvA tetramers; dsDNA enters through RuvA and exits via RuvB. An RuvB hexamer assembles on each DNA strand where it exits the tetramer. Each RuvB hexamer is contacted by two RuvA subunits (via domain III) on 2 adjacent RuvB subunits; this complex drives branch migration. In the full resolvosome a probable DNA-RuvA(4)-RuvB(12)-RuvC(2) complex forms which resolves the HJ.

The protein localises to the cytoplasm. It catalyses the reaction ATP + H2O = ADP + phosphate + H(+). In terms of biological role, the RuvA-RuvB-RuvC complex processes Holliday junction (HJ) DNA during genetic recombination and DNA repair, while the RuvA-RuvB complex plays an important role in the rescue of blocked DNA replication forks via replication fork reversal (RFR). RuvA specifically binds to HJ cruciform DNA, conferring on it an open structure. The RuvB hexamer acts as an ATP-dependent pump, pulling dsDNA into and through the RuvAB complex. RuvB forms 2 homohexamers on either side of HJ DNA bound by 1 or 2 RuvA tetramers; 4 subunits per hexamer contact DNA at a time. Coordinated motions by a converter formed by DNA-disengaged RuvB subunits stimulates ATP hydrolysis and nucleotide exchange. Immobilization of the converter enables RuvB to convert the ATP-contained energy into a lever motion, pulling 2 nucleotides of DNA out of the RuvA tetramer per ATP hydrolyzed, thus driving DNA branch migration. The RuvB motors rotate together with the DNA substrate, which together with the progressing nucleotide cycle form the mechanistic basis for DNA recombination by continuous HJ branch migration. Branch migration allows RuvC to scan DNA until it finds its consensus sequence, where it cleaves and resolves cruciform DNA. In Streptococcus mutans serotype c (strain ATCC 700610 / UA159), this protein is Holliday junction branch migration complex subunit RuvB.